We begin with the raw amino-acid sequence, 835 residues long: Ion-translocating oxidoreductase complex subunit C (835 aa).

4Fe-4S ferredoxin-type domains lie at 368–397 and 407–436; these read YAPPAPEQSCIRCSACSDACPVSLMPQQLY and KSEEYALKDCIECGLCAYVCPSHIPLIQYF. Cys-377, Cys-380, Cys-383, Cys-387, Cys-416, Cys-419, Cys-422, and Cys-426 together coordinate [4Fe-4S] cluster. Over residues 468–489 the composition is skewed to basic and acidic residues; that stretch reads AREEQERKARAQKAMEARRQEM. Disordered regions lie at residues 468 to 492, 540 to 574, 586 to 618, 634 to 666, 682 to 714, 730 to 762, and 778 to 811; these read AREEQERKARAQKAMEARRQEMKTA, QRKARRLARQQQTQNTDVSQVETNEENKSTDSKSA, KAAQQGSALEKDEISSSDTLSVGNDTEPVAEDP, KAAQQGSAVEKDEISSSNTLSVGNDTEPVADDP, KAAQQGSAVEQDEISSSDTLSIGNEAEPVADDP, KAAQQRSAVEQDEISSSDTLSVGNETESVAEDP, and KAAQQRSAVEQDEISSSDTLSVGNETESVAEDPR. The segment covering 552–561 has biased composition (polar residues); sequence TQNTDVSQVE. Polar residues predominate over residues 648–657; sequence SSSNTLSVGN. 2 stretches are compositionally biased toward polar residues: residues 745 to 756 and 793 to 804; these read SSDTLSVGNETE.

It belongs to the 4Fe4S bacterial-type ferredoxin family. RnfC subfamily. The complex is composed of six subunits: RnfA, RnfB, RnfC, RnfD, RnfE and RnfG. It depends on [4Fe-4S] cluster as a cofactor.

The protein resides in the cell inner membrane. Its function is as follows. Part of a membrane-bound complex that couples electron transfer with translocation of ions across the membrane. In Pasteurella multocida (strain Pm70), this protein is Ion-translocating oxidoreductase complex subunit C.